The following is a 313-amino-acid chain: uncharacterized protein (313 aa).

Disordered regions lie at residues 24-53 (EEGE…PTPN) and 190-291 (TALS…PCAR). Residues 211–229 (TQNYVLKLQLSSPNSQPMS) are compositionally biased toward polar residues. The segment covering 239 to 260 (SCSSSNCSSSSSSSACSSVSIS) has biased composition (low complexity). The span at 261–284 (DPNNITAYETNNVNPQFPSNQPLD) shows a compositional bias: polar residues.

This is an uncharacterized protein from Saccharomyces cerevisiae (strain ATCC 204508 / S288c) (Baker's yeast).